Here is a 306-residue protein sequence, read N- to C-terminus: Acetylglutamate kinase (306 aa).

Substrate-binding positions include 79–80 (GG), R101, and N203.

The protein belongs to the acetylglutamate kinase family. ArgB subfamily.

Its subcellular location is the cytoplasm. The catalysed reaction is N-acetyl-L-glutamate + ATP = N-acetyl-L-glutamyl 5-phosphate + ADP. Its pathway is amino-acid biosynthesis; L-arginine biosynthesis; N(2)-acetyl-L-ornithine from L-glutamate: step 2/4. In terms of biological role, catalyzes the ATP-dependent phosphorylation of N-acetyl-L-glutamate. The polypeptide is Acetylglutamate kinase (Polaromonas naphthalenivorans (strain CJ2)).